The chain runs to 271 residues: Phospholipid scramblase family member 5 (271 aa).

Positions Met1 to Arg10 are enriched in polar residues. The interval Met1 to Pro33 is disordered. Residues Met1–Pro45 form a proline-rich domain (PRD) region.

This sequence belongs to the phospholipid scramblase family.

In Homo sapiens (Human), this protein is Phospholipid scramblase family member 5 (PLSCR5).